We begin with the raw amino-acid sequence, 125 residues long: Large ribosomal subunit protein bL19 (125 aa).

Belongs to the bacterial ribosomal protein bL19 family.

In terms of biological role, this protein is located at the 30S-50S ribosomal subunit interface and may play a role in the structure and function of the aminoacyl-tRNA binding site. The protein is Large ribosomal subunit protein bL19 of Ehrlichia canis (strain Jake).